A 497-amino-acid chain; its full sequence is Serine/threonine-protein phosphatase 2A 56 kDa regulatory subunit beta isoform (497 aa).

Low complexity predominate over residues 1 to 19 (METKLPPASTPTSPSSPGL). 2 disordered regions span residues 1 to 55 (METK…YQSN) and 475 to 497 (TQGAKEAPLQRLTPQVAASGGQS). Phosphoserine; by CLK2 is present on residues S32, S35, S44, S46, S47, and S48. The span at 34–45 (RSLRRARPRRSH) shows a compositional bias: basic residues.

The protein belongs to the phosphatase 2A regulatory subunit B56 family. Component of the serine/threonine-protein phosphatase 2A complex (PP2A). This complex consists of a common heterodimeric core enzyme, composed of a 36 kDa catalytic subunit (subunit C) and a 65 kDa constant scaffold subunit (PR65 or subunit A), that associates with a variety of regulatory subunits. Proteins that associate with the core dimer include three families of regulatory subunits B (the R2/B/PR55/B55, R3/B''/PR72/PR130/PR59 and R5/B'/B56 families), the 48 kDa variable regulatory subunit, viral proteins, and cell signaling molecules. Interacts with SGO1. Interacts with AKT1. Interacts with CUL3 and KLHL15; this interaction leads to proteasomal degradation. In terms of processing, ubiquitinated by E3 CUL3-KLHL15 complex; this modification leads to proteasomal degradation. As to expression, highest expression in brain.

It localises to the cytoplasm. As the regulatory component of the serine/threonine-protein phosphatase 2A (PP2A) holoenzyme, modulates substrate specificity, subcellular localization, and responsiveness to phosphorylation. The phosphorylated form mediates the interaction between PP2A and AKT1, leading to AKT1 dephosphorylation. This Homo sapiens (Human) protein is Serine/threonine-protein phosphatase 2A 56 kDa regulatory subunit beta isoform (PPP2R5B).